The chain runs to 649 residues: 1,4-alpha-glucan branching enzyme GlgB (649 aa).

The Nucleophile role is filled by Asp315. Glu366 functions as the Proton donor in the catalytic mechanism.

It belongs to the glycosyl hydrolase 13 family. GlgB subfamily. As to quaternary structure, monomer.

The catalysed reaction is Transfers a segment of a (1-&gt;4)-alpha-D-glucan chain to a primary hydroxy group in a similar glucan chain.. The protein operates within glycan biosynthesis; glycogen biosynthesis. Functionally, catalyzes the formation of the alpha-1,6-glucosidic linkages in glycogen by scission of a 1,4-alpha-linked oligosaccharide from growing alpha-1,4-glucan chains and the subsequent attachment of the oligosaccharide to the alpha-1,6 position. This chain is 1,4-alpha-glucan branching enzyme GlgB, found in Ligilactobacillus salivarius (strain UCC118) (Lactobacillus salivarius).